The following is a 201-amino-acid chain: Holliday junction branch migration complex subunit RuvA (201 aa).

A domain I region spans residues 1-63 (MISHFSGTVS…EESLTLYGFV (63 aa)). Residues 64-142 (EADDRDAFEL…ALAPRGASAS (79 aa)) are domain II. The segment at 143–153 (GATHVAAPWRE) is flexible linker. The segment at 153-201 (EQVAEGLVGLGWSTKDAEKAVDKVVALKEADPAMSIGNLMRAALRSLAR) is domain III.

The protein belongs to the RuvA family. Homotetramer. Forms an RuvA(8)-RuvB(12)-Holliday junction (HJ) complex. HJ DNA is sandwiched between 2 RuvA tetramers; dsDNA enters through RuvA and exits via RuvB. An RuvB hexamer assembles on each DNA strand where it exits the tetramer. Each RuvB hexamer is contacted by two RuvA subunits (via domain III) on 2 adjacent RuvB subunits; this complex drives branch migration. In the full resolvosome a probable DNA-RuvA(4)-RuvB(12)-RuvC(2) complex forms which resolves the HJ.

It localises to the cytoplasm. The RuvA-RuvB-RuvC complex processes Holliday junction (HJ) DNA during genetic recombination and DNA repair, while the RuvA-RuvB complex plays an important role in the rescue of blocked DNA replication forks via replication fork reversal (RFR). RuvA specifically binds to HJ cruciform DNA, conferring on it an open structure. The RuvB hexamer acts as an ATP-dependent pump, pulling dsDNA into and through the RuvAB complex. HJ branch migration allows RuvC to scan DNA until it finds its consensus sequence, where it cleaves and resolves the cruciform DNA. The polypeptide is Holliday junction branch migration complex subunit RuvA (Cutibacterium acnes (strain DSM 16379 / KPA171202) (Propionibacterium acnes)).